The primary structure comprises 191 residues: Signal peptidase complex catalytic subunit sec11 (191 aa).

Residues 1-18 lie on the Cytoplasmic side of the membrane; the sequence is MLSALGGNLSNARQSIAQ. The chain crosses the membrane as a helical; Signal-anchor for type II membrane protein span at residues 19-39; that stretch reads VLNFALVLSTAFMLWKGVSIA. At 40–191 the chain is on the lumenal side; the sequence is SNSSSPIVVV…MGLMVILQRE (152 aa). A glycan (N-linked (GlcNAc...) asparagine) is linked at N41. Residues S53, H92, and D133 each act as charge relay system in the active site. Positions 177–188 are C-terminal short (CTS) helix; that stretch reads VLLGVMGLMVIL.

It belongs to the peptidase S26B family. As to quaternary structure, component of the signal peptidase complex (SPC) composed of a catalytic subunit SEC11 and three accessory subunits SPC1, SPC2 and SPC3. The complex induces a local thinning of the ER membrane which is used to measure the length of the signal peptide (SP) h-region of protein substrates. This ensures the selectivity of the complex towards h-regions shorter than 18-20 amino acids. SPC associates with the translocon complex.

The protein resides in the endoplasmic reticulum membrane. The catalysed reaction is Cleavage of hydrophobic, N-terminal signal or leader sequences from secreted and periplasmic proteins.. In terms of biological role, catalytic component of the signal peptidase complex (SPC) which catalyzes the cleavage of N-terminal signal sequences from nascent proteins as they are translocated into the lumen of the endoplasmic reticulum. Specifically cleaves N-terminal signal peptides that contain a hydrophobic alpha-helix (h-region) shorter than 18-20 amino acids. This is Signal peptidase complex catalytic subunit sec11 (sec11) from Talaromyces marneffei (strain ATCC 18224 / CBS 334.59 / QM 7333) (Penicillium marneffei).